The sequence spans 236 residues: Ribose-5-phosphate isomerase A (236 aa).

Residues 28–31 (TGST), 83–86 (DGAD), and 96–99 (KGGG) contribute to the substrate site. Glu-105 (proton acceptor) is an active-site residue. Lys-123 contacts substrate.

The protein belongs to the ribose 5-phosphate isomerase family. In terms of assembly, homodimer.

The catalysed reaction is aldehydo-D-ribose 5-phosphate = D-ribulose 5-phosphate. Its pathway is carbohydrate degradation; pentose phosphate pathway; D-ribose 5-phosphate from D-ribulose 5-phosphate (non-oxidative stage): step 1/1. Catalyzes the reversible conversion of ribose-5-phosphate to ribulose 5-phosphate. The protein is Ribose-5-phosphate isomerase A of Methylorubrum extorquens (strain CM4 / NCIMB 13688) (Methylobacterium extorquens).